A 293-amino-acid chain; its full sequence is 4-hydroxy-tetrahydrodipicolinate synthase (293 aa).

Thr-45 serves as a coordination point for pyruvate. The Proton donor/acceptor role is filled by Tyr-133. Catalysis depends on Lys-161, which acts as the Schiff-base intermediate with substrate. Pyruvate is bound at residue Ile-204.

Belongs to the DapA family. As to quaternary structure, homotetramer; dimer of dimers.

The protein localises to the cytoplasm. It catalyses the reaction L-aspartate 4-semialdehyde + pyruvate = (2S,4S)-4-hydroxy-2,3,4,5-tetrahydrodipicolinate + H2O + H(+). The protein operates within amino-acid biosynthesis; L-lysine biosynthesis via DAP pathway; (S)-tetrahydrodipicolinate from L-aspartate: step 3/4. Functionally, catalyzes the condensation of (S)-aspartate-beta-semialdehyde [(S)-ASA] and pyruvate to 4-hydroxy-tetrahydrodipicolinate (HTPA). This chain is 4-hydroxy-tetrahydrodipicolinate synthase, found in Edwardsiella ictaluri (strain 93-146).